The primary structure comprises 493 residues: Reticulophagy regulator 1 (493 aa).

Residues 1-52 (MASPAPPEPAEQGSPALAAAPQAPPPPTRAPPEEPEGAAPPEEGAAAGAGRQ) are disordered. The Cytoplasmic segment spans residues 1 to 55 (MASPAPPEPAEQGSPALAAAPQAPPPPTRAPPEEPEGAAPPEEGAAAGAGRQVEE). The segment covering 37–52 (GAAPPEEGAAAGAGRQ) has biased composition (low complexity). Residues 56-76 (AAGGVAAVVTWLLGEPALWLG) traverse the membrane as a helical segment. The Lumenal portion of the chain corresponds to 77 to 87 (GRADELLSWKR). Residues 80-229 (DELLSWKRPL…LLCAFLCPLF (150 aa)) are reticulon homology domain. A helical transmembrane segment spans residues 88–108 (PLHSLLAFVGANLVFWFLALT). The Cytoplasmic segment spans residues 109–114 (PWRVYH). Residues 115 to 135 (LISVMILTRVIMQIIKDMILS) traverse the membrane as a helical segment. Topologically, residues 136–204 (RTRGAQLWRS…LVCSVCTFFT (69 aa)) are lumenal. S145 bears the Phosphoserine mark. S147 bears the Phosphoserine; by CAMK2B mark. Phosphoserine is present on S149. Residues 205 to 225 (ILGSYIPGVILSYLLLLCAFL) traverse the membrane as a helical segment. The Cytoplasmic portion of the chain corresponds to 226 to 493 (CPLFKCNDIG…GFLSNLLGGH (268 aa)). Over residues 315-326 (FNLSEGYTPQTD) the composition is skewed to polar residues. 2 disordered regions span residues 315–394 (FNLS…GLSL) and 435–493 (AAPS…LGGH). The segment covering 330 to 344 (DLDRPSEEVFSRDLS) has biased composition (basic and acidic residues). Residue T353 is modified to Phosphothreonine. Over residues 368–388 (ELKRKKEQLDGGPRRSTEKKS) the composition is skewed to basic and acidic residues. Residues 441–463 (EDTDTEEGDDFELLDQSELDQIE) are compositionally biased toward acidic residues. The LIR motif signature appears at 449–454 (DDFELL). Over residues 467 to 486 (GLSQDQEAEAQQNKKSSGFL) the composition is skewed to polar residues.

Belongs to the RETREG family. As to quaternary structure, homooligomer; oligomerization is enhanced following endoplasmic reticulum stress and is mediated by the reticulon homology domain. Interacts with ATG8 family modifier proteins MAP1LC3A, MAP1LC3B, GABARAP, GABARAPL1 and GABARAPL2. Phosphorylation at Ser-147 by CAMK2B enhances oligomerization and membrane scission and reticulophagy activity.

Its subcellular location is the golgi apparatus. It is found in the cis-Golgi network membrane. The protein localises to the endoplasmic reticulum membrane. Endoplasmic reticulum (ER)-anchored autophagy regulator which mediates ER delivery into lysosomes through sequestration into autophagosomes. Promotes membrane remodeling and ER scission via its membrane bending capacity and targets the fragments into autophagosomes via interaction with ATG8 family proteins. Active under basal conditions. Required for collagen quality control in a LIR motif-dependent manner. Required for long-term survival of nociceptive and autonomic ganglion neurons. The polypeptide is Reticulophagy regulator 1 (RETREG1) (Bos taurus (Bovine)).